The primary structure comprises 170 residues: IQPPKNLLFSSLLFSSLLFSSAAQAASEDRRSPYYVQADLAYAAERITHDYPQATGANNTSTVSDYFRNIRAHSIHPRVSVGYDFGGWRIAADYASYRKWNNNKYSVNTKELENKHNNKKDLKTENQENGTFHAASSLGLSAIYDFKLKGKFKPYIGARVAYGHVRHSID.

This sequence belongs to the opacity porin family.

The protein localises to the cell outer membrane. This is Opacity-related protein POPM3 (opr) from Neisseria meningitidis serogroup C.